Reading from the N-terminus, the 644-residue chain is Exoribonuclease 2 (644 aa).

The RNB domain maps to 189-516 (RRDLTALDFV…NHRLLKAIIK (328 aa)). The region spanning 561–643 (DTRFAAEILD…ETRSIIARPA (83 aa)) is the S1 motif domain.

This sequence belongs to the RNR ribonuclease family. RNase II subfamily.

The protein localises to the cytoplasm. The enzyme catalyses Exonucleolytic cleavage in the 3'- to 5'-direction to yield nucleoside 5'-phosphates.. Involved in mRNA degradation. Hydrolyzes single-stranded polyribonucleotides processively in the 3' to 5' direction. This chain is Exoribonuclease 2, found in Klebsiella pneumoniae (strain 342).